Consider the following 228-residue polypeptide: tRNA (guanine-N(1)-)-methyltransferase (228 aa).

S-adenosyl-L-methionine contacts are provided by residues Gly-111 and 130 to 135 (IGDFVL).

It belongs to the RNA methyltransferase TrmD family. Homodimer.

Its subcellular location is the cytoplasm. The catalysed reaction is guanosine(37) in tRNA + S-adenosyl-L-methionine = N(1)-methylguanosine(37) in tRNA + S-adenosyl-L-homocysteine + H(+). Specifically methylates guanosine-37 in various tRNAs. This is tRNA (guanine-N(1)-)-methyltransferase from Ureaplasma urealyticum serovar 10 (strain ATCC 33699 / Western).